The chain runs to 1545 residues: Pentafunctional AROM polypeptide (1545 aa).

Residues 1–383 are 3-dehydroquinate synthase; that stretch reads MSGLIEKVSI…YEPKASYVND (383 aa). NAD(+)-binding positions include 44–46, 82–85, 113–115, and aspartate 118; these read DSN, EANK, and GGV. Arginine 129 serves as a coordination point for 7-phospho-2-dehydro-3-deoxy-D-arabino-heptonate. An NAD(+)-binding site is contributed by 138 to 139; it reads TS. 7-phospho-2-dehydro-3-deoxy-D-arabino-heptonate is bound by residues aspartate 145 and lysine 151. Lysine 160 is an NAD(+) binding site. Position 161 (asparagine 161) interacts with 7-phospho-2-dehydro-3-deoxy-D-arabino-heptonate. NAD(+) is bound by residues 178–181 and asparagine 189; that span reads FLET. Glutamate 193 contacts Zn(2+). Residues 193–196 and lysine 249 each bind 7-phospho-2-dehydro-3-deoxy-D-arabino-heptonate; that span reads EVVK. The active-site Proton acceptor; for 3-dehydroquinate synthase activity is the glutamate 259. 7-phospho-2-dehydro-3-deoxy-D-arabino-heptonate is bound by residues 263–267 and histidine 270; that span reads RNLLN. Histidine 270 serves as a coordination point for Zn(2+). Histidine 274 functions as the Proton acceptor; for 3-dehydroquinate synthase activity in the catalytic mechanism. The 7-phospho-2-dehydro-3-deoxy-D-arabino-heptonate site is built by histidine 286 and lysine 355. Histidine 286 provides a ligand contact to Zn(2+). The interval 396–840 is EPSP synthase; sequence VKDFNSAPST…WDILHTTFNV (445 aa). Residue cysteine 822 is the For EPSP synthase activity of the active site. The interval 859–1049 is shikimate kinase; the sequence is DKSIIVIGMR…IPNGRSAFVC (191 aa). 866–873 provides a ligand contact to ATP; sequence GMRAAGKS. The 3-dehydroquinase stretch occupies residues 1050–1261; sequence LTYEDLAPVS…AAPGQLTLKE (212 aa). Histidine 1166 acts as the Proton acceptor; for 3-dehydroquinate dehydratase activity in catalysis. Residue lysine 1195 is the Schiff-base intermediate with substrate; for 3-dehydroquinate dehydratase activity of the active site. A shikimate dehydrogenase region spans residues 1274–1545; sequence RKKFYIVGKP…GYQFSSHIDL (272 aa).

It in the N-terminal section; belongs to the sugar phosphate cyclases superfamily. Dehydroquinate synthase family. In the 2nd section; belongs to the EPSP synthase family. This sequence in the 3rd section; belongs to the shikimate kinase family. The protein in the 4th section; belongs to the type-I 3-dehydroquinase family. It in the C-terminal section; belongs to the shikimate dehydrogenase family. As to quaternary structure, homodimer. Requires Zn(2+) as cofactor.

Its subcellular location is the cytoplasm. The catalysed reaction is 7-phospho-2-dehydro-3-deoxy-D-arabino-heptonate = 3-dehydroquinate + phosphate. The enzyme catalyses 3-dehydroquinate = 3-dehydroshikimate + H2O. It carries out the reaction shikimate + NADP(+) = 3-dehydroshikimate + NADPH + H(+). It catalyses the reaction shikimate + ATP = 3-phosphoshikimate + ADP + H(+). The catalysed reaction is 3-phosphoshikimate + phosphoenolpyruvate = 5-O-(1-carboxyvinyl)-3-phosphoshikimate + phosphate. Its pathway is metabolic intermediate biosynthesis; chorismate biosynthesis; chorismate from D-erythrose 4-phosphate and phosphoenolpyruvate: step 2/7. It functions in the pathway metabolic intermediate biosynthesis; chorismate biosynthesis; chorismate from D-erythrose 4-phosphate and phosphoenolpyruvate: step 3/7. It participates in metabolic intermediate biosynthesis; chorismate biosynthesis; chorismate from D-erythrose 4-phosphate and phosphoenolpyruvate: step 4/7. The protein operates within metabolic intermediate biosynthesis; chorismate biosynthesis; chorismate from D-erythrose 4-phosphate and phosphoenolpyruvate: step 5/7. Its pathway is metabolic intermediate biosynthesis; chorismate biosynthesis; chorismate from D-erythrose 4-phosphate and phosphoenolpyruvate: step 6/7. The AROM polypeptide catalyzes 5 consecutive enzymatic reactions in prechorismate polyaromatic amino acid biosynthesis. This Komagataella phaffii (strain GS115 / ATCC 20864) (Yeast) protein is Pentafunctional AROM polypeptide.